The sequence spans 342 residues: Outer spore wall protein RRT8 (342 aa).

Residues Met1 to His109 are Cytoplasmic-facing. A helical membrane pass occupies residues Ile110–Val130. Thr131 is a topological domain (extracellular). The helical transmembrane segment at Leu132–Val152 threads the bilayer. The Cytoplasmic portion of the chain corresponds to His153–Lys240. Residues Val241–Ala261 traverse the membrane as a helical segment. Over Asn262–Phe299 the chain is Extracellular. The chain crosses the membrane as a helical span at residues Ile300–Ile320. Topologically, residues Ser321–Glu342 are cytoplasmic.

Belongs to the LDS family.

It localises to the prospore membrane. The protein resides in the lipid droplet. It is found in the spore wall. Its function is as follows. Involved in spore wall assembly. May be involved in the modulation of rDNA transcription. This chain is Outer spore wall protein RRT8, found in Saccharomyces cerevisiae (strain ATCC 204508 / S288c) (Baker's yeast).